Here is a 275-residue protein sequence, read N- to C-terminus: NH(3)-dependent NAD(+) synthetase (275 aa).

47–54 contributes to the ATP binding site; sequence GISGGQDS. Asp-53 provides a ligand contact to Mg(2+). Arg-141 is a binding site for deamido-NAD(+). Thr-161 lines the ATP pocket. Glu-166 serves as a coordination point for Mg(2+). Deamido-NAD(+)-binding residues include Lys-174 and Asp-181. ATP-binding residues include Lys-190 and Thr-212. Position 261–262 (261–262) interacts with deamido-NAD(+); sequence HK.

It belongs to the NAD synthetase family. As to quaternary structure, homodimer.

The enzyme catalyses deamido-NAD(+) + NH4(+) + ATP = AMP + diphosphate + NAD(+) + H(+). It participates in cofactor biosynthesis; NAD(+) biosynthesis; NAD(+) from deamido-NAD(+) (ammonia route): step 1/1. Functionally, catalyzes the ATP-dependent amidation of deamido-NAD to form NAD. Uses ammonia as a nitrogen source. This chain is NH(3)-dependent NAD(+) synthetase, found in Lacticaseibacillus paracasei (strain ATCC 334 / BCRC 17002 / CCUG 31169 / CIP 107868 / KCTC 3260 / NRRL B-441) (Lactobacillus paracasei).